The sequence spans 946 residues: Aminopeptidase N (946 aa).

The first 15 residues, 1–15, serve as a signal peptide directing secretion; that stretch reads MRLLICLTLLGLVCG. N60 is a glycosylation site (N-linked (GlcNAc...) asparagine). A substrate-binding site is contributed by 308 to 312; it reads GAMEN. A Zn(2+)-binding site is contributed by H344. E345 (proton acceptor) is an active-site residue. Zn(2+) contacts are provided by H348 and E367. 2 N-linked (GlcNAc...) asparagine glycosylation sites follow: N550 and N605. 2 disulfide bridges follow: C715–C722 and C751–C787.

It belongs to the peptidase M1 family. The cofactor is Zn(2+).

It is found in the cell membrane. It carries out the reaction Release of an N-terminal amino acid, Xaa-|-Yaa- from a peptide, amide or arylamide. Xaa is preferably Ala, but may be most amino acids including Pro (slow action). When a terminal hydrophobic residue is followed by a prolyl residue, the two may be released as an intact Xaa-Pro dipeptide.. This chain is Aminopeptidase N (APN1), found in Plutella xylostella (Diamondback moth).